A 148-amino-acid polypeptide reads, in one-letter code: Large ribosomal subunit protein bL9 (148 aa).

The protein belongs to the bacterial ribosomal protein bL9 family.

Functionally, binds to the 23S rRNA. This Pelotomaculum thermopropionicum (strain DSM 13744 / JCM 10971 / SI) protein is Large ribosomal subunit protein bL9.